Reading from the N-terminus, the 180-residue chain is RFAHDPMAGGHRMWQMAGLKAQRAQTDVNNKQAAFDAAAKEKADADAALSTAMESRKKKEDNKRDAEGKLNDELAKNKGKIPGLKIDQKIRGQMPERGWTEDDIKNTVSNGATGTSFDKRSPKKTPPDYLGRNDPATVYGSPGKYVVVNDRTGEVTQISDKTDPGWVDDSRIQWGNKNDQ.

2 disordered regions span residues A24–G143 and V155–Q180. Over residues E54–K76 the composition is skewed to basic and acidic residues. A nuclease region spans residues L74–Q180. Over residues N106 to S116 the composition is skewed to polar residues. Over residues D160–R171 the composition is skewed to basic and acidic residues.

Belongs to the colicin/pyosin nuclease family.

Its function is as follows. Colicins are polypeptide toxins produced by and active against E.coli and closely related bacteria. This colicin is an endonuclease. This chain is Colicin-E5 (col), found in Escherichia coli.